The following is a 600-amino-acid chain: tRNA uridine 5-carboxymethylaminomethyl modification enzyme MnmG (600 aa).

10–15 (GGGHAG) contributes to the FAD binding site. The interval 216-239 (ADPQPRGFTGTPGPRAAESPTWQT) is disordered. 267-281 (GPRYCPSIEDKVVKF) serves as a coordination point for NAD(+).

This sequence belongs to the MnmG family. In terms of assembly, homodimer. Heterotetramer of two MnmE and two MnmG subunits. FAD serves as cofactor.

It localises to the cytoplasm. In terms of biological role, NAD-binding protein involved in the addition of a carboxymethylaminomethyl (cmnm) group at the wobble position (U34) of certain tRNAs, forming tRNA-cmnm(5)s(2)U34. This chain is tRNA uridine 5-carboxymethylaminomethyl modification enzyme MnmG, found in Deinococcus radiodurans (strain ATCC 13939 / DSM 20539 / JCM 16871 / CCUG 27074 / LMG 4051 / NBRC 15346 / NCIMB 9279 / VKM B-1422 / R1).